We begin with the raw amino-acid sequence, 361 residues long: tRNA/tmRNA (uracil-C(5))-methyltransferase (361 aa).

S-adenosyl-L-methionine is bound by residues Gln185, Tyr213, Asn218, Glu234, and Asp294. Cys319 acts as the Nucleophile in catalysis. Glu353 functions as the Proton acceptor in the catalytic mechanism.

This sequence belongs to the class I-like SAM-binding methyltransferase superfamily. RNA M5U methyltransferase family. TrmA subfamily.

It carries out the reaction uridine(54) in tRNA + S-adenosyl-L-methionine = 5-methyluridine(54) in tRNA + S-adenosyl-L-homocysteine + H(+). The catalysed reaction is uridine(341) in tmRNA + S-adenosyl-L-methionine = 5-methyluridine(341) in tmRNA + S-adenosyl-L-homocysteine + H(+). Its function is as follows. Dual-specificity methyltransferase that catalyzes the formation of 5-methyluridine at position 54 (m5U54) in all tRNAs, and that of position 341 (m5U341) in tmRNA (transfer-mRNA). This chain is tRNA/tmRNA (uracil-C(5))-methyltransferase, found in Pseudomonas syringae pv. syringae (strain B728a).